A 335-amino-acid polypeptide reads, in one-letter code: UPF0353 protein NFA_34780 (335 aa).

2 consecutive transmembrane segments (helical) span residues 8-28 (ALIW…YVLV) and 61-81 (IALM…PTSV). The region spanning 90–295 (TVVLVMDVSL…EELTAVYDTL (206 aa)) is the VWFA domain. The chain crosses the membrane as a helical span at residues 310–330 (RPWLLLGMLVVAAGIVTGLLY).

The protein belongs to the UPF0353 family.

The protein resides in the cell membrane. In Nocardia farcinica (strain IFM 10152), this protein is UPF0353 protein NFA_34780.